The following is a 309-amino-acid chain: Ribonuclease Z (309 aa).

Zn(2+) is bound by residues His-63, His-65, Asp-67, His-68, His-145, Asp-216, and His-274. Asp-67 (proton acceptor) is an active-site residue.

It belongs to the RNase Z family. In terms of assembly, homodimer. Zn(2+) serves as cofactor.

It carries out the reaction Endonucleolytic cleavage of RNA, removing extra 3' nucleotides from tRNA precursor, generating 3' termini of tRNAs. A 3'-hydroxy group is left at the tRNA terminus and a 5'-phosphoryl group is left at the trailer molecule.. Functionally, zinc phosphodiesterase, which displays some tRNA 3'-processing endonuclease activity. Probably involved in tRNA maturation, by removing a 3'-trailer from precursor tRNA. This Streptococcus equi subsp. zooepidemicus (strain H70) protein is Ribonuclease Z.